A 302-amino-acid chain; its full sequence is 4-diphosphocytidyl-2-C-methyl-D-erythritol kinase (302 aa).

Residue Lys-11 is part of the active site. ATP is bound at residue 93–103 (PVASGLAGGST). Residue Asp-135 is part of the active site.

The protein belongs to the GHMP kinase family. IspE subfamily.

The catalysed reaction is 4-CDP-2-C-methyl-D-erythritol + ATP = 4-CDP-2-C-methyl-D-erythritol 2-phosphate + ADP + H(+). It functions in the pathway isoprenoid biosynthesis; isopentenyl diphosphate biosynthesis via DXP pathway; isopentenyl diphosphate from 1-deoxy-D-xylulose 5-phosphate: step 3/6. Catalyzes the phosphorylation of the position 2 hydroxy group of 4-diphosphocytidyl-2C-methyl-D-erythritol. The polypeptide is 4-diphosphocytidyl-2-C-methyl-D-erythritol kinase (Gloeobacter violaceus (strain ATCC 29082 / PCC 7421)).